A 122-amino-acid polypeptide reads, in one-letter code: UPF0102 protein Dred_2035 (122 aa).

It belongs to the UPF0102 family.

This chain is UPF0102 protein Dred_2035, found in Desulforamulus reducens (strain ATCC BAA-1160 / DSM 100696 / MI-1) (Desulfotomaculum reducens).